A 190-amino-acid polypeptide reads, in one-letter code: Endoribonuclease YbeY (190 aa).

Histidine 147, histidine 151, and histidine 157 together coordinate Zn(2+).

The protein belongs to the endoribonuclease YbeY family. Zn(2+) is required as a cofactor.

The protein resides in the cytoplasm. Single strand-specific metallo-endoribonuclease involved in late-stage 70S ribosome quality control and in maturation of the 3' terminus of the 16S rRNA. The protein is Endoribonuclease YbeY of Nitrobacter winogradskyi (strain ATCC 25391 / DSM 10237 / CIP 104748 / NCIMB 11846 / Nb-255).